The chain runs to 819 residues: MSLSSAFRAVSNDPRIITWRIEKMELALVPLSAHGNFYEGDCYIVLSTRRVGSLLSQNIHFWIGKDSSQDEQSCAAIYTTQLDDYLGGSPVQHREVQYHESDTFRGYFKQGIIYKKGGVASGMKHVETNTYDVKRLLHVKGKRNIQATEVEMSWDSFNRGDVFLLDLGMVIIQWNGPESNSGERLKAMLLAKDIRDRERGGRAEIGVIEGDKEAASPGLMTVLQDTLGRRSMIKPAVSDEIMDQQQKSSIMLYHVSDTAGQLSVTEVATRPLVQDLLNHDDCYILDQSGTKIYVWKGKGATKVEKQAAMSKALDFIKMKGYPSSTNVETVNDGAESAMFKQLFQKWSVKDQTTGLGKIFSTGKIAKIFQDKFDVSLLHTKPEVAAQERMVDDGKGQVEVWRIENLELVPVEYQWHGFFYGGDCYLVLYTYDVNGKPHYILYIWQGRHASRDELAASAYRAVEVDQQFDGAPVQVRVSMGKEPRHFMAIFKGKLVIYEGGTSRKGNEEPDPPVRLFQIHGNDKSNTKAVEVSASASSLNSNDVFLLRTQAEHYLWYGKGSSGDERAMAKELVDLLCDGNADTVAEGQEPPEFWDLLGGKTAYANDKRLQQETLDVQVRLFECSNKTGRFLVTEVTDFTQEDLSPGDVMLLDTWDQVFLWIGAEANATEKKGALSTAQEYLVTHPSGRDPDTPILIIKQGFEPPTFTGWFLAWDPHIWSEGKSYEQLKNELGDATAIVRITADMKNATLYLNPSDGEPKYYPVEVLLKGQNQELPEDVDPAKKENYLSEQDFVSVFGITRGQFTALPGWKQLQLKKERGLF.

Residues 1 to 731 (MSLSSAFRAV…YEQLKNELGD (731 aa)) are core. Residues 24-73 (MELALVPLSAHGNFYEGDCYIVLSTRRVGSLLSQNIHFWIGKDSSQDEQS) form a Gelsolin-like 1 repeat. Tyrosine 85 is subject to Phosphotyrosine. Residues 109–116 (KQGIIYKK) and 135–143 (RLLHVKGKR) contribute to the a 1,2-diacyl-sn-glycero-3-phospho-(1D-myo-inositol-4,5-bisphosphate) site. Gelsolin-like repeat units lie at residues 145-185 (IQAT…GERL), 262-306 (LSVT…VEKQ), 403-454 (ENLE…DELA), 525-565 (TKAV…DERA), and 628-669 (FLVT…TEKK). The segment at 628–819 (FLVTEVTDFT…LQLKKERGLF (192 aa)) is required for interaction with F-actin. Residues 732-819 (ATAIVRITAD…LQLKKERGLF (88 aa)) form a headpiece region. A phosphotyrosine mark is found at tyrosine 748 and tyrosine 758. The 67-residue stretch at 753 to 819 (DGEPKYYPVE…LQLKKERGLF (67 aa)) folds into the HP domain.

It belongs to the villin/gelsolin family. Associates (via C-terminus) with actin. Interacts with F-actin. Interacts with SCARF1; the interaction occurs in embryonic dorsal root ganglions at 18 dpc and induces neurite-like outgrowth. Interacts with PLCE1. Interacts with ACTR2 and ACTR3; associates with the ARP2/3 complex. Most highly expressed in the endometrium of the uterus, the intestinal villi and the testes. Weaker expression also detected in the brain, dorsal root ganglions and on the surface of the tongue.

The protein resides in the cytoplasm. Its subcellular location is the cytoskeleton. The protein localises to the cell projection. It is found in the lamellipodium. It localises to the cell junction. The protein resides in the focal adhesion. Its subcellular location is the neuron projection. The protein localises to the axon. In terms of biological role, ca(2+)-regulated actin-binding protein which plays an important role in actin bundling. May have a unique function in the morphogenesis of neuronal cells which form ganglia. Required for SREC1-mediated regulation of neurite-like outgrowth. Plays a role in regenerative sensory axon outgrowth and remodeling processes after peripheral injury in neonates. Involved in the formation of long fine actin-containing filopodia-like structures in fibroblast. Plays a role in ciliogenesis. In podocytes, controls lamellipodia formation through the regulation of EGF-induced diacylglycerol generation by PLCE1 and ARP2/3 complex assembly. The protein is Advillin of Mus musculus (Mouse).